The primary structure comprises 92 residues: Small ribosomal subunit protein uS19c (92 aa).

The protein belongs to the universal ribosomal protein uS19 family.

It localises to the plastid. It is found in the chloroplast. In terms of biological role, protein S19 forms a complex with S13 that binds strongly to the 16S ribosomal RNA. This is Small ribosomal subunit protein uS19c from Spirogyra maxima (Green alga).